We begin with the raw amino-acid sequence, 883 residues long: Mitogen-activated protein kinase kinase kinase YODA (883 aa).

3 disordered regions span residues 28 to 193 (GFAS…AEMF), 303 to 364 (CSPE…PPLL), and 376 to 396 (SAATSPSVPRSPARAEATVSP). Low complexity predominate over residues 57–72 (SRLPSRSPSPSTRVSR). Residues 94–105 (VTSTDSGMNGSQ) are compositionally biased toward polar residues. The span at 143–165 (SVSSGSSVGDIPSDSLLSPLASD) shows a compositional bias: low complexity. Polar residues-rich tracts occupy residues 167-189 (ENGNRTPVNISSRDQSMHSNKNS) and 314-328 (RMTSPGPSSRIQSGA). The region spanning 400-656 (WKKGRLLGMG…AAQLLDHAFV (257 aa)) is the Protein kinase domain. Residues 406-414 (LGMGSFGHV) and K429 each bind ATP. D525 acts as the Proton acceptor in catalysis. 2 disordered regions span residues 712–773 (GSGF…GAIP) and 787–838 (EGIG…IQPG). Positions 733 to 756 (SPIFHSHSPHISGRRSPSPISSPH) are enriched in low complexity.

It belongs to the protein kinase superfamily. STE Ser/Thr protein kinase family. MAP kinase kinase kinase subfamily. As to quaternary structure, interacts with ASK7. Interacts with BSK12/SSP. Binds to BASL and MPK6. As to expression, expressed in roots, leaves, guard cells, stems, flowers and siliques.

The protein resides in the cytoplasm. Its subcellular location is the cell cortex. It is found in the cell membrane. The enzyme catalyses L-seryl-[protein] + ATP = O-phospho-L-seryl-[protein] + ADP + H(+). It carries out the reaction L-threonyl-[protein] + ATP = O-phospho-L-threonyl-[protein] + ADP + H(+). With respect to regulation, contains an N-terminal autoinhibitory domain. In terms of biological role, functions in a MAP kinase cascade that acts as a molecular switch to regulate the first cell fate decisions in the zygote and the early embryo. Promotes elongation of the zygote and development of its basal daughter cell into the extra-embryonic suspensor. In stomatal development, acts downstream of the LRR receptor TMM, but upstream of the MKK4/MKK5-MPK3/MPK6 module to regulate stomatal cell fate before the guard mother cell (GMC) is specified. Plays a central role in both guard cell identity and pattern formation. This MAPK cascade also functions downstream of the ER receptor in regulating coordinated local cell proliferation, which shapes the morphology of plant organs. Upon brassinosteroid signaling, is inhibited by phosphorylation of its auto-inhibitory N-terminal domain by the GSK3-like kinase ASK7. The polypeptide is Mitogen-activated protein kinase kinase kinase YODA (Arabidopsis thaliana (Mouse-ear cress)).